A 202-amino-acid chain; its full sequence is Precorrin-2 dehydrogenase (202 aa).

Residues 20-21 (TI) and 41-42 (PT) each bind NAD(+).

Belongs to the precorrin-2 dehydrogenase / sirohydrochlorin ferrochelatase family. Homodimer.

The enzyme catalyses precorrin-2 + NAD(+) = sirohydrochlorin + NADH + 2 H(+). The protein operates within cofactor biosynthesis; adenosylcobalamin biosynthesis; sirohydrochlorin from precorrin-2: step 1/1. It participates in porphyrin-containing compound metabolism; siroheme biosynthesis; sirohydrochlorin from precorrin-2: step 1/1. Catalyzes the dehydrogenation of precorrin-2 to form sirohydrochlorin which is used as a precursor in both siroheme biosynthesis and in the anaerobic branch of adenosylcobalamin biosynthesis. It is unable to oxidize precorrin-3. The chain is Precorrin-2 dehydrogenase (sirC) from Priestia megaterium (Bacillus megaterium).